The sequence spans 456 residues: PTS system sucrose-specific EIIBC component (456 aa).

The PTS EIIB type-1 domain occupies 4–87 (EQISRSLLPL…IQAAGISESS (84 aa)). Residue Cys-26 is the Phosphocysteine intermediate; for EIIB activity of the active site. The PTS EIIC type-1 domain occupies 107-456 (RLLSNIFVPI…LTLKYKTDAE (350 aa)). A run of 10 helical transmembrane segments spans residues 112–132 (IFVPIIPAIVASGLLMGLLGM), 144–164 (ALYIMLDMCSSAAFIILPILI), 181–201 (TLGGILTHPALTNAWGVAAGF), 209–229 (IEVAMIGYQGTVFPVLLAVWF), 247–267 (LILTPFLTVIISGFIALLLIG), 288–308 (AGWLAGLLFGGLYSVIVITGI), 329–349 (FLLPIWAMANVAQGGACFAVW), 360–380 (ITLPSAFSAMLGITEAAIFGI), 388–408 (FIAALVGGAAGGAWVVSMHVY), and 428–448 (LLNYIIGMAIAFAVAFALSLT).

The protein localises to the cell inner membrane. It carries out the reaction N(pros)-phospho-L-histidyl-[protein](out) + sucrose = sucrose 6(G)-phosphate(in) + L-histidyl-[protein]. Functionally, the phosphoenolpyruvate-dependent sugar phosphotransferase system (sugar PTS), a major carbohydrate active transport system, catalyzes the phosphorylation of incoming sugar substrates concomitantly with their translocation across the cell membrane. This system is involved in sucrose transport. The sequence is that of PTS system sucrose-specific EIIBC component from Klebsiella pneumoniae.